Reading from the N-terminus, the 457-residue chain is Siroheme synthase 2 (457 aa).

Residues 1–204 (MDHLPIFCQL…DDRQAVADTT (204 aa)) are precorrin-2 dehydrogenase /sirohydrochlorin ferrochelatase. NAD(+) contacts are provided by residues 22–23 (DV) and 43–44 (LD). Ser-128 is subject to Phosphoserine. Residues 216–457 (GEVVLVGAGP…RDKLNWFSNH (242 aa)) are uroporphyrinogen-III C-methyltransferase. Pro-225 contributes to the S-adenosyl-L-methionine binding site. Residue Asp-248 is the Proton acceptor of the active site. Lys-270 (proton donor) is an active-site residue. S-adenosyl-L-methionine-binding positions include 301–303 (GGD), Ile-306, 331–332 (TA), Met-382, and Gly-411.

The protein in the N-terminal section; belongs to the precorrin-2 dehydrogenase / sirohydrochlorin ferrochelatase family. In the C-terminal section; belongs to the precorrin methyltransferase family.

It carries out the reaction uroporphyrinogen III + 2 S-adenosyl-L-methionine = precorrin-2 + 2 S-adenosyl-L-homocysteine + H(+). The catalysed reaction is precorrin-2 + NAD(+) = sirohydrochlorin + NADH + 2 H(+). The enzyme catalyses siroheme + 2 H(+) = sirohydrochlorin + Fe(2+). The protein operates within cofactor biosynthesis; adenosylcobalamin biosynthesis; precorrin-2 from uroporphyrinogen III: step 1/1. It participates in cofactor biosynthesis; adenosylcobalamin biosynthesis; sirohydrochlorin from precorrin-2: step 1/1. It functions in the pathway porphyrin-containing compound metabolism; siroheme biosynthesis; precorrin-2 from uroporphyrinogen III: step 1/1. Its pathway is porphyrin-containing compound metabolism; siroheme biosynthesis; siroheme from sirohydrochlorin: step 1/1. The protein operates within porphyrin-containing compound metabolism; siroheme biosynthesis; sirohydrochlorin from precorrin-2: step 1/1. In terms of biological role, multifunctional enzyme that catalyzes the SAM-dependent methylations of uroporphyrinogen III at position C-2 and C-7 to form precorrin-2 via precorrin-1. Then it catalyzes the NAD-dependent ring dehydrogenation of precorrin-2 to yield sirohydrochlorin. Finally, it catalyzes the ferrochelation of sirohydrochlorin to yield siroheme. In Klebsiella pneumoniae subsp. pneumoniae (strain ATCC 700721 / MGH 78578), this protein is Siroheme synthase 2.